Consider the following 237-residue polypeptide: Class B acid phosphatase (237 aa).

The signal sequence occupies residues 1 to 23 (MRKTPLALSAVFLLLSLNQSAFA). The active-site Nucleophile is the aspartate 69. Positions 69 and 71 each coordinate Mg(2+). The active-site Proton donor is the aspartate 71. Substrate-binding positions include 137 to 138 (TG) and lysine 177. Aspartate 192 is a binding site for Mg(2+).

This sequence belongs to the class B bacterial acid phosphatase family. Homotetramer. The cofactor is Mg(2+).

The protein localises to the periplasm. It catalyses the reaction a phosphate monoester + H2O = an alcohol + phosphate. In terms of biological role, dephosphorylates several organic phosphate monoesters. Also has a phosphotransferase activity catalyzing the transfer of low-energy phosphate groups from organic phosphate monoesters to free hydroxyl groups of various organic compounds. This chain is Class B acid phosphatase, found in Rahnella sp. (strain Y9602).